A 473-amino-acid polypeptide reads, in one-letter code: Photosystem II CP43 reaction center protein (473 aa).

Positions 1–14 are excised as a propeptide; sequence MKTLYSLRRSYPVE. Thr15 bears the N-acetylthreonine mark. A Phosphothreonine modification is found at Thr15. A run of 5 helical transmembrane segments spans residues 69-93, 134-155, 178-200, 255-275, and 291-312; these read LFEV…PHLA, LIGP…KDKN, KALY…RKIT, KPFA…LSYS, and WFNN…ASQA. Glu367 contacts [CaMn4O5] cluster. The helical transmembrane segment at 447-471 threads the bilayer; the sequence is RARAAAAGFEKGIDRDTEPVLFMNP.

This sequence belongs to the PsbB/PsbC family. PsbC subfamily. PSII is composed of 1 copy each of membrane proteins PsbA, PsbB, PsbC, PsbD, PsbE, PsbF, PsbH, PsbI, PsbJ, PsbK, PsbL, PsbM, PsbT, PsbX, PsbY, PsbZ, Psb30/Ycf12, at least 3 peripheral proteins of the oxygen-evolving complex and a large number of cofactors. It forms dimeric complexes. Binds multiple chlorophylls and provides some of the ligands for the Ca-4Mn-5O cluster of the oxygen-evolving complex. It may also provide a ligand for a Cl- that is required for oxygen evolution. PSII binds additional chlorophylls, carotenoids and specific lipids. is required as a cofactor.

It localises to the plastid. It is found in the chloroplast thylakoid membrane. In terms of biological role, one of the components of the core complex of photosystem II (PSII). It binds chlorophyll and helps catalyze the primary light-induced photochemical processes of PSII. PSII is a light-driven water:plastoquinone oxidoreductase, using light energy to abstract electrons from H(2)O, generating O(2) and a proton gradient subsequently used for ATP formation. This is Photosystem II CP43 reaction center protein from Zygnema circumcarinatum (Green alga).